A 728-amino-acid chain; its full sequence is Protein Hook homolog 1 (728 aa).

M1 carries the N-acetylmethionine modification. Residues 1–555 are sufficient for interaction with microtubules; the sequence is MEETQPPPQP…LKQKLEAHME (555 aa). Residues 12–128 enclose the Calponin-homology (CH) domain; that stretch reads LPLCDSLMIW…RLLQLILGCA (117 aa). Coiled coils occupy residues 169–434 and 477–658; these read PNDA…RCSQ and LRLQ…AKFR. Residues 169-444 form a sufficient for homodimerization, interaction wit HOOK2, HOOK3 and AP4M1 region; it reads PNDAVGELEQ…VQQDHLNQTD (276 aa). S235 carries the post-translational modification Phosphoserine. The interval 481-512 is disordered; the sequence is QEGSENERIEELQEQLEQKHRKMNELETEQRL. Over residues 503–512 the composition is skewed to basic and acidic residues; it reads MNELETEQRL. The sufficient for interaction with AKTIP and VPS18 stretch occupies residues 657-728; that stretch reads FRDYEEKLIV…SVKVPATTSD (72 aa). The residue at position 699 (T699) is a Phosphothreonine. Phosphoserine is present on residues S719 and S727.

This sequence belongs to the hook family. Self-associates. Component of the FTS/Hook/FHIP complex (FHF complex), composed of AKTIP/FTS, FHIP1B, and one or more members of the Hook family of proteins HOOK1, HOOK2, and HOOK3. Interacts directly with AKTIP/FTS, HOOK2 and HOOK3. Associates with several subunits of the homotypic vesicular sorting complex (the HOPS complex) including VPS16, VPS18, VPS39 and VPS41; these interactions may be indirect. Interacts with CCDC181. Interacts (via coiled-coil region) with RIMBP3 (via C-terminus). Interacts with LRGUK (via guanylate kinase-like domain). Interacts with microtubules. May interact with CLN3. Interacts with AP4M1; the interaction is direct, mediates the interaction between FTS-Hook-FHIP (FHF) complex and AP-4 and the perinuclear distribution of AP-4.

The protein resides in the cytoplasm. The protein localises to the cytoskeleton. In terms of biological role, component of the FTS/Hook/FHIP complex (FHF complex). The FHF complex may function to promote vesicle trafficking and/or fusion via the homotypic vesicular protein sorting complex (the HOPS complex). FHF complex promotes the distribution of AP-4 complex to the perinuclear area of the cell. Required for spermatid differentiation. Probably involved in the positioning of the microtubules of the manchette and the flagellum in relation to the membrane skeleton. The chain is Protein Hook homolog 1 from Homo sapiens (Human).